The sequence spans 278 residues: Tryptophan 2,3-dioxygenase (278 aa).

Residues 47–51 (FIIQH), Tyr110, and Arg114 contribute to the substrate site. His236 serves as a coordination point for heme. Thr250 is a binding site for substrate.

The protein belongs to the tryptophan 2,3-dioxygenase family. In terms of assembly, homotetramer. Heme is required as a cofactor.

The catalysed reaction is L-tryptophan + O2 = N-formyl-L-kynurenine. It participates in amino-acid degradation; L-tryptophan degradation via kynurenine pathway; L-kynurenine from L-tryptophan: step 1/2. Its function is as follows. Heme-dependent dioxygenase that catalyzes the oxidative cleavage of the L-tryptophan (L-Trp) pyrrole ring and converts L-tryptophan to N-formyl-L-kynurenine. Catalyzes the oxidative cleavage of the indole moiety. The protein is Tryptophan 2,3-dioxygenase of Ruegeria pomeroyi (strain ATCC 700808 / DSM 15171 / DSS-3) (Silicibacter pomeroyi).